The primary structure comprises 892 residues: Putative ubiquitin carboxyl-terminal hydrolase 11 (892 aa).

The DUSP domain maps to 17 to 132 (YTPEEERRIV…GGPPVPRKLI (116 aa)). The segment at 69–89 (EPSEVTRPGPIDNHDIIDSES) is disordered. In terms of domain architecture, USP spans 301-880 (GGLQNLGNTC…AAYVLFYQRV (580 aa)). Catalysis depends on Cys-310, which acts as the Nucleophile. The interval 636 to 660 (NSGNENGHVPDESSRSILSRDTETE) is disordered. The segment covering 643 to 657 (HVPDESSRSILSRDT) has biased composition (basic and acidic residues). His-838 (proton acceptor) is an active-site residue.

It belongs to the peptidase C19 family.

It carries out the reaction Thiol-dependent hydrolysis of ester, thioester, amide, peptide and isopeptide bonds formed by the C-terminal Gly of ubiquitin (a 76-residue protein attached to proteins as an intracellular targeting signal).. Recognizes and hydrolyzes the peptide bond at the C-terminal Gly of ubiquitin. Involved in the processing of poly-ubiquitin precursors as well as that of ubiquitinated proteins. In Arabidopsis thaliana (Mouse-ear cress), this protein is Putative ubiquitin carboxyl-terminal hydrolase 11 (UBP11).